Reading from the N-terminus, the 496-residue chain is Catalase-A (496 aa).

Active-site residues include H54 and N128. Y338 contacts heme. Positions 494–496 (SNL) match the Microbody targeting signal motif.

Belongs to the catalase family. Requires heme as cofactor.

Its subcellular location is the peroxisome matrix. It carries out the reaction 2 H2O2 = O2 + 2 H2O. Catalyzes the degradation of hydrogen peroxide (H(2)O(2)) generated by peroxisomal oxidases to water and oxygen, thereby protecting cells from the toxic effects of hydrogen peroxide. The chain is Catalase-A (catA) from Dictyostelium discoideum (Social amoeba).